The chain runs to 284 residues: MYVVSTKQMLNNAQRGGYAVPAFNIHNLETMQVVVETAANLHAPVIIAGTPGTFTHAGTENLLALVSAMAKQYHHPLAIHLDHHTKFDDIAQKVRSGVRSVMIDASHLPFAQNISRVKEVVDFCHRFDVSVEAELGQLGGQEDDVQVNEVDALYTNPAQAREFAEATGIDSLAVAIGTAHGMYASAPVLDFSRLENIRQWVNLPLVLHGASGLSTKDIQQTIKLGICKINVATELKNAFLQSLKNYLTEHPEATDPRDYLQSAKSAMRDVVSKVIADCGCEGRA.

The active-site Proton donor is Asp-82. Zn(2+)-binding residues include His-83 and His-180. Gly-181 contacts dihydroxyacetone phosphate. His-208 contacts Zn(2+). Dihydroxyacetone phosphate is bound by residues 209–211 (GAS) and 230–233 (NVAT).

The protein belongs to the class II fructose-bisphosphate aldolase family. TagBP aldolase GatY subfamily. Forms a complex with GatZ. Requires Zn(2+) as cofactor.

The catalysed reaction is D-tagatofuranose 1,6-bisphosphate = D-glyceraldehyde 3-phosphate + dihydroxyacetone phosphate. It functions in the pathway carbohydrate metabolism; D-tagatose 6-phosphate degradation; D-glyceraldehyde 3-phosphate and glycerone phosphate from D-tagatose 6-phosphate: step 2/2. Functionally, catalytic subunit of the tagatose-1,6-bisphosphate aldolase GatYZ, which catalyzes the reversible aldol condensation of dihydroxyacetone phosphate (DHAP or glycerone-phosphate) with glyceraldehyde 3-phosphate (G3P) to produce tagatose 1,6-bisphosphate (TBP). Requires GatZ subunit for full activity and stability. Is involved in the catabolism of galactitol. The polypeptide is D-tagatose-1,6-bisphosphate aldolase subunit GatY (Shigella flexneri).